Reading from the N-terminus, the 20-residue chain is Antimicrobial peptide AJN-10 (20 aa).

The protein resides in the secreted. Its function is as follows. Displays antimicrobial activity against the Gram-negative bacterium A.hydrophila. The sequence is that of Antimicrobial peptide AJN-10 from Anguilla japonica (Japanese eel).